Reading from the N-terminus, the 430-residue chain is Dihydroorotase (430 aa).

The Zn(2+) site is built by H57 and H59. Substrate contacts are provided by residues 59-61 (HLR) and N91. 3 residues coordinate Zn(2+): D151, H178, and H231. N277 contributes to the substrate binding site. D304 contributes to the Zn(2+) binding site. The active site involves D304. Substrate-binding positions include H308 and 322-323 (PG).

It belongs to the metallo-dependent hydrolases superfamily. DHOase family. Class I DHOase subfamily. Requires Zn(2+) as cofactor.

It carries out the reaction (S)-dihydroorotate + H2O = N-carbamoyl-L-aspartate + H(+). The protein operates within pyrimidine metabolism; UMP biosynthesis via de novo pathway; (S)-dihydroorotate from bicarbonate: step 3/3. In terms of biological role, catalyzes the reversible cyclization of carbamoyl aspartate to dihydroorotate. In Mycobacterium tuberculosis (strain ATCC 25618 / H37Rv), this protein is Dihydroorotase.